The chain runs to 205 residues: Nitrophorin-7 (205 aa).

An N-terminal signal peptide occupies residues 1–20 (MELYTALLAVTILSPSSIVG). Intrachain disulfides connect C25-C144 and C62-C193. D52 is a binding site for histamine. Heme contacts are provided by H80 and N91. Residue D154 coordinates histamine.

It belongs to the calycin superfamily. Nitrophorin family. In terms of assembly, forms oligomers (at pH 5.5). It depends on heme b as a cofactor. Expressed in the endothelial cells of the salivary glands.

It localises to the secreted. It catalyses the reaction 3 nitrite + 2 H(+) = 2 nitric oxide + nitrate + H2O. Functionally, converts nitrite as the sole substrate to form nitric oxide gas (NO). NO(2-) serves both as an electron donor and as an electron acceptor. Binds to negatively charged cell surfaces of activated platelets; binds to L-a-phosphatidyl-L-serine (PS)-bearing phospholipid membranes. Once bound on an activated platelet, NP7 releases its stored nitric oxide gas (NO) into the victim's tissues while feeding, resulting in vasodilation and inhibition of platelet aggregation. Also acts as an anticoagulant by blocking coagulation-factor binding sites. Has antihistamine activity; binds histamine with high affinity. The chain is Nitrophorin-7 from Rhodnius prolixus (Triatomid bug).